A 169-amino-acid polypeptide reads, in one-letter code: MKTFIVITFIGILSYAYADECENPEPMQGFSASQFYQGXWYVTHETSAXTLSECNILTTSNDNGKFTVKHKYTKDGXVGELICEGQASANNKFTYDCKFXGZTMEQVTRTAMDTDYNDYALYYLCTTYKXGPNAGKKEGHYILSRRQPNTEIPDALKTKTKDLNLKLCG.

An N-terminal signal peptide occupies residues 1-18; the sequence is MKTFIVITFIGILSYAYA. 3 cysteine pairs are disulfide-bonded: cysteine 21/cysteine 125, cysteine 54/cysteine 168, and cysteine 83/cysteine 97.

The protein belongs to the calycin superfamily. Triabin family. As to expression, expressed in salivary glands.

It is found in the secreted. The protein is Procalin of Hospesneotomae protracta (Western bloodsucking conenose).